The sequence spans 175 residues: Inorganic pyrophosphatase (175 aa).

Residues Lys-30, Arg-44, and Tyr-56 each coordinate substrate. Mg(2+) contacts are provided by Asp-66, Asp-71, and Asp-103. Residue Tyr-142 participates in substrate binding.

Belongs to the PPase family. As to quaternary structure, homohexamer. Mg(2+) serves as cofactor.

It localises to the cytoplasm. The catalysed reaction is diphosphate + H2O = 2 phosphate + H(+). Its function is as follows. Catalyzes the hydrolysis of inorganic pyrophosphate (PPi) forming two phosphate ions. The protein is Inorganic pyrophosphatase of Haemophilus ducreyi (strain 35000HP / ATCC 700724).